Consider the following 215-residue polypeptide: Large ribosomal subunit protein uL4c (215 aa).

Residues Q51–S87 are disordered. Residues G67–G78 show a composition bias toward basic residues.

The protein belongs to the universal ribosomal protein uL4 family. As to quaternary structure, part of the 50S ribosomal subunit.

It is found in the plastid. The protein resides in the chloroplast. In terms of biological role, probably binds the 23S rRNA. The chain is Large ribosomal subunit protein uL4c (rpl4) from Thalassiosira pseudonana (Marine diatom).